The primary structure comprises 411 residues: D-ribitol-5-phosphate cytidylyltransferase (411 aa).

Belongs to the IspD/TarI cytidylyltransferase family. IspD subfamily. As to quaternary structure, homodimer.

It is found in the cytoplasm. Its subcellular location is the cytosol. It catalyses the reaction D-ribitol 5-phosphate + CTP + H(+) = CDP-L-ribitol + diphosphate. It carries out the reaction D-ribose 5-phosphate + CTP + H(+) = CDP-D-ribose + diphosphate. The catalysed reaction is D-ribulose 5-phosphate + CTP + H(+) = CDP-D-ribulose + diphosphate. It participates in protein modification; protein glycosylation. In terms of biological role, cytidylyltransferase required for protein O-linked mannosylation. Catalyzes the formation of CDP-ribitol nucleotide sugar from D-ribitol 5-phosphate. CDP-ribitol is a substrate of FKTN during the biosynthesis of the phosphorylated O-mannosyl trisaccharide (N-acetylgalactosamine-beta-3-N-acetylglucosamine-beta-4-(phosphate-6-)mannose), a carbohydrate structure present in alpha-dystroglycan (DAG1), which is required for binding laminin G-like domain-containing extracellular proteins with high affinity. Shows activity toward other pentose phosphate sugars and mediates formation of CDP-ribulose or CDP-ribose using CTP and ribulose-5-phosphate or ribose-5-phosphate, respectively. Not involved in dolichol production. The chain is D-ribitol-5-phosphate cytidylyltransferase (crppa) from Xenopus tropicalis (Western clawed frog).